Consider the following 287-residue polypeptide: Uroporphyrinogen-III C-methyltransferase (287 aa).

Positions 1-10 (MAGKTVTNGA) are enriched in polar residues. Residues 1 to 24 (MAGKTVTNGAAQGKAARSGADGAV) are disordered. S-adenosyl-L-methionine-binding positions include Pro40, 116-118 (GGD), Thr146, and Met199.

Belongs to the precorrin methyltransferase family.

It catalyses the reaction uroporphyrinogen III + 2 S-adenosyl-L-methionine = precorrin-2 + 2 S-adenosyl-L-homocysteine + H(+). Its pathway is porphyrin-containing compound metabolism; siroheme biosynthesis; precorrin-2 from uroporphyrinogen III: step 1/1. Catalyzes the methylation of both C-2 and C-7 of uroporphyrinogen III leading to precorrin-1 and precorrin-2; their oxidative esterification gives respectively factor I octamethyl ester and sirohydrochlorin. Inactivation of uroporphyrinogen-III methyltransferase results in the loss of nitrite and nitric oxide reductase activities, but not of nitrous oxide reductase activity. Likely involved in heme D1 biosynthesis. The protein is Uroporphyrinogen-III C-methyltransferase (nirE) of Paracoccus denitrificans (strain Pd 1222).